Here is a 203-residue protein sequence, read N- to C-terminus: 3-isopropylmalate dehydratase small subunit (203 aa).

It belongs to the LeuD family. LeuD type 1 subfamily. As to quaternary structure, heterodimer of LeuC and LeuD.

It catalyses the reaction (2R,3S)-3-isopropylmalate = (2S)-2-isopropylmalate. The protein operates within amino-acid biosynthesis; L-leucine biosynthesis; L-leucine from 3-methyl-2-oxobutanoate: step 2/4. Catalyzes the isomerization between 2-isopropylmalate and 3-isopropylmalate, via the formation of 2-isopropylmaleate. The protein is 3-isopropylmalate dehydratase small subunit of Pelagibacter ubique (strain HTCC1062).